Here is a 320-residue protein sequence, read N- to C-terminus: MQNRNTFSWIKEQMTRSISVSIMIYVITRTAISNAYPIFAQQGYENPREATGRIVCANCHLANKPVDIEVPQAVLPDTVFEAVVRIPYDMQVKQVLANGKKGALNVGAVLILPEGFELAPPDRISPEMKEKIGKLSFQSYRPTKKNILVIGPVPGQKYSEITFPILSPDPATKKDVHFLKYPIYVGGNRGRGQIYPDGSKSNNTVYNATAAGIISKIVRKEKGGYEISIADASDGHQVVDIIPPGPELLVSEGESIKLDQPLTSNPNVGGFGQGDAEIVLQDPLRVQGLLFFLASVILAQIFLVLKKKQFEKVQLSEMNF.

The first 35 residues, 1-35, serve as a signal peptide directing secretion; sequence MQNRNTFSWIKEQMTRSISVSIMIYVITRTAISNA. The heme site is built by Tyr-36, Cys-56, Cys-59, and His-60. Residues 286–306 traverse the membrane as a helical segment; the sequence is VQGLLFFLASVILAQIFLVLK.

Belongs to the cytochrome f family. In terms of assembly, the 4 large subunits of the cytochrome b6-f complex are cytochrome b6, subunit IV (17 kDa polypeptide, petD), cytochrome f and the Rieske protein, while the 4 small subunits are PetG, PetL, PetM and PetN. The complex functions as a dimer. Heme is required as a cofactor.

The protein localises to the plastid. It is found in the chloroplast thylakoid membrane. Functionally, component of the cytochrome b6-f complex, which mediates electron transfer between photosystem II (PSII) and photosystem I (PSI), cyclic electron flow around PSI, and state transitions. This Platanus occidentalis (Sycamore) protein is Cytochrome f.